Consider the following 230-residue polypeptide: 2,3-bisphosphoglycerate-dependent phosphoglycerate mutase (230 aa).

Substrate-binding positions include Arg8 to Asn15, Thr21 to Gly22, Arg60, Glu87 to Tyr90, Lys98, Arg114 to Arg115, and Gly183 to Asn184. His9 (tele-phosphohistidine intermediate) is an active-site residue. The active-site Proton donor/acceptor is the Glu87.

The protein belongs to the phosphoglycerate mutase family. BPG-dependent PGAM subfamily.

The catalysed reaction is (2R)-2-phosphoglycerate = (2R)-3-phosphoglycerate. It functions in the pathway carbohydrate degradation; glycolysis; pyruvate from D-glyceraldehyde 3-phosphate: step 3/5. Its function is as follows. Catalyzes the interconversion of 2-phosphoglycerate and 3-phosphoglycerate. The sequence is that of 2,3-bisphosphoglycerate-dependent phosphoglycerate mutase from Streptococcus sanguinis (strain SK36).